An 863-amino-acid polypeptide reads, in one-letter code: Receptor-like protein 9DC1 (863 aa).

The first 21 residues, 1 to 21 (MGCVKLVFFMLYVFLFQLVSS), serve as a signal peptide directing secretion. Topologically, residues 22 to 812 (SSLPHLCPED…EEDSPMISWQ (791 aa)) are extracellular. An N-cap region spans residues 24-90 (LPHLCPEDQA…GVHCDETTGQ (67 aa)). N-linked (GlcNAc...) asparagine glycosylation is found at asparagine 71 and asparagine 108. One copy of the LRR 1; degenerate repeat lies at 91-114 (VIALDLRCSQLQGKFHSNSSLFQL). 2 LRR repeats span residues 115–138 (SNLK…KFGE) and 140–163 (SDLT…ISHL). Residues 164–190 (SKLHVLLIGDQYGLSIVPHNFEPLLKN) form an LRR 4; degenerate repeat. N-linked (GlcNAc...) asparagine glycans are attached at residues asparagine 190, asparagine 203, and asparagine 211. 6 LRR repeats span residues 191–213 (LTQL…SNFS), 214–237 (SHLT…VFHL), 240–262 (LEFL…KWNS), 264–286 (ASLM…SFSH), 287–311 (LTSL…LWNL), and 312–336 (TNIE…IFEK). Asparagine 261 carries N-linked (GlcNAc...) asparagine glycosylation. N-linked (GlcNAc...) asparagine glycosylation is found at asparagine 299 and asparagine 310. One copy of the LRR 11; degenerate repeat lies at 337–357 (LKKLSLFRNDNLDGGLEFLSF). 15 LRR repeats span residues 358–382 (NTQL…ISGL), 383–406 (QNLE…IFSL), 408–428 (SLVE…EFKS), 429–452 (KTLS…LLNQ), 454–476 (NLQL…ICNL), 477–500 (KTLI…VVER), 502–524 (EYLS…TFSV), 525–549 (GNIL…MINC), 551–572 (YLTL…WLGY), 573–597 (LFQL…GNTN), 599–623 (FMGL…ILGN), 667–690 (LDSN…IIGD), 691–714 (LVGL…SFQN), 715–739 (LSVL…LASL), and 741–759 (FLEV…IPKG). Asparagine 378, asparagine 396, and asparagine 416 each carry an N-linked (GlcNAc...) asparagine glycan. An N-linked (GlcNAc...) asparagine glycan is attached at asparagine 464. Asparagine 519 is a glycosylation site (N-linked (GlcNAc...) asparagine). N-linked (GlcNAc...) asparagine glycosylation occurs at asparagine 563. 3 N-linked (GlcNAc...) asparagine glycosylation sites follow: asparagine 674, asparagine 698, and asparagine 714. Residues asparagine 746 and asparagine 767 are each glycosylated (N-linked (GlcNAc...) asparagine). Residues 760-812 (KQFDSFGNTSYQGNDGLRGFPLSKLCGGEDQVTTPAELDQEEEEEDSPMISWQ) are C-cap/acidic domain. The chain crosses the membrane as a helical span at residues 813–833 (GVLVGYGCGLVIGLSVIYIMW). Topologically, residues 834–863 (STQYPAWFSRMDLKLEHIITTKMKKHKKRY) are cytoplasmic.

This sequence belongs to the RLP family.

Its subcellular location is the cell membrane. In terms of biological role, involved in plant defense. Confers resistance to the fungal pathogen C.fulvum through recognition of the AVR9 elicitor protein. The chain is Receptor-like protein 9DC1 from Solanum pimpinellifolium (Currant tomato).